The following is a 1415-amino-acid chain: Major viral transcription factor ICP4 homolog (1415 aa).

Disordered regions lie at residues 48–272 (MDDD…SSSG), 454–480 (DNSS…TSTQ), 691–935 (LLND…PSCY), and 1371–1415 (QHEE…TFTD). Positions 96 to 105 (PRLTTPSSGR) are enriched in polar residues. Residues 125 to 187 (PETSPSNEHI…LSSPSSSRSP (63 aa)) are compositionally biased toward low complexity. The span at 245-255 (GGGRPRGRPPK) shows a compositional bias: basic residues. 2 stretches are compositionally biased toward polar residues: residues 263 to 272 (NDIQVTSSSG) and 465 to 480 (SKPS…TSTQ). A compositionally biased stretch (low complexity) spans 724-738 (STSSSQSASDKSPIK). Polar residues-rich tracts occupy residues 814 to 837 (KAQT…QSSS) and 895 to 910 (VGQT…HDIL). A compositionally biased stretch (low complexity) spans 911-933 (SSSLPNRSCSSSPSPSKRPYHPS).

The protein belongs to the herpesviridae ICP4 family. A long stretch of serine residues may be a major site of phosphorylation.

Its subcellular location is the host nucleus. This IE protein is a multifunctional protein capable of migrating to the nucleus, binding to DNA, trans-activating other viral genes, and autoregulating its own synthesis. It is required for the switch from immediate-early to early mode of gene expression. This chain is Major viral transcription factor ICP4 homolog (ICP4), found in Gallus gallus (Chicken).